Consider the following 164-residue polypeptide: Protein-export protein SecB (164 aa).

Belongs to the SecB family. In terms of assembly, homotetramer, a dimer of dimers. One homotetramer interacts with 1 SecA dimer.

The protein localises to the cytoplasm. One of the proteins required for the normal export of preproteins out of the cell cytoplasm. It is a molecular chaperone that binds to a subset of precursor proteins, maintaining them in a translocation-competent state. It also specifically binds to its receptor SecA. The chain is Protein-export protein SecB from Burkholderia orbicola (strain MC0-3).